Here is a 134-residue protein sequence, read N- to C-terminus: NADPH-dependent 7-cyano-7-deazaguanine reductase (134 aa).

The Thioimide intermediate role is filled by Cys48. The active-site Proton donor is the Asp55. Residues 70-72 (VEL) and 89-90 (QE) contribute to the substrate site.

It belongs to the GTP cyclohydrolase I family. QueF type 1 subfamily.

It localises to the cytoplasm. The catalysed reaction is 7-aminomethyl-7-carbaguanine + 2 NADP(+) = 7-cyano-7-deazaguanine + 2 NADPH + 3 H(+). The protein operates within tRNA modification; tRNA-queuosine biosynthesis. In terms of biological role, catalyzes the NADPH-dependent reduction of 7-cyano-7-deazaguanine (preQ0) to 7-aminomethyl-7-deazaguanine (preQ1). In Caldanaerobacter subterraneus subsp. tengcongensis (strain DSM 15242 / JCM 11007 / NBRC 100824 / MB4) (Thermoanaerobacter tengcongensis), this protein is NADPH-dependent 7-cyano-7-deazaguanine reductase.